Reading from the N-terminus, the 95-residue chain is CRISPR-associated endoribonuclease Cas2 (95 aa).

Residue Asp10 participates in Mg(2+) binding.

This sequence belongs to the CRISPR-associated endoribonuclease Cas2 protein family. Homodimer, forms a heterotetramer with a Cas1 homodimer. It depends on Mg(2+) as a cofactor.

Its function is as follows. CRISPR (clustered regularly interspaced short palindromic repeat), is an adaptive immune system that provides protection against mobile genetic elements (viruses, transposable elements and conjugative plasmids). CRISPR clusters contain sequences complementary to antecedent mobile elements and target invading nucleic acids. CRISPR clusters are transcribed and processed into CRISPR RNA (crRNA). Functions as a ssRNA-specific endoribonuclease. Involved in the integration of spacer DNA into the CRISPR cassette. The polypeptide is CRISPR-associated endoribonuclease Cas2 (Geobacter sulfurreducens (strain ATCC 51573 / DSM 12127 / PCA)).